The sequence spans 264 residues: 3-methyl-2-oxobutanoate hydroxymethyltransferase (264 aa).

Mg(2+) contacts are provided by Asp45 and Asp84. Residues 45–46 (DS), Asp84, and Lys112 each bind 3-methyl-2-oxobutanoate. Glu114 lines the Mg(2+) pocket. The active-site Proton acceptor is Glu181.

The protein belongs to the PanB family. As to quaternary structure, homodecamer; pentamer of dimers. It depends on Mg(2+) as a cofactor.

The protein resides in the cytoplasm. It catalyses the reaction 3-methyl-2-oxobutanoate + (6R)-5,10-methylene-5,6,7,8-tetrahydrofolate + H2O = 2-dehydropantoate + (6S)-5,6,7,8-tetrahydrofolate. Its pathway is cofactor biosynthesis; (R)-pantothenate biosynthesis; (R)-pantoate from 3-methyl-2-oxobutanoate: step 1/2. Its function is as follows. Catalyzes the reversible reaction in which hydroxymethyl group from 5,10-methylenetetrahydrofolate is transferred onto alpha-ketoisovalerate to form ketopantoate. The protein is 3-methyl-2-oxobutanoate hydroxymethyltransferase of Psychromonas ingrahamii (strain DSM 17664 / CCUG 51855 / 37).